Here is a 319-residue protein sequence, read N- to C-terminus: ATP-dependent 6-phosphofructokinase (319 aa).

Glycine 11 is an ATP binding site. 21–25 (RAVVR) is a binding site for ADP. Residues 72–73 (RC) and 102–105 (GEGS) contribute to the ATP site. Mg(2+) is bound at residue glutamate 103. Position 126–128 (126–128 (TID)) interacts with substrate. Aspartate 128 functions as the Proton acceptor in the catalytic mechanism. Lysine 155 lines the ADP pocket. Residues arginine 163 and 170 to 172 (MGR) each bind substrate. ADP is bound by residues 186–188 (GAE), arginine 212, and 214–216 (KIN). Residues glutamate 223, arginine 244, and 250–253 (HVQR) each bind substrate.

Belongs to the phosphofructokinase type A (PFKA) family. ATP-dependent PFK group I subfamily. Prokaryotic clade 'B1' sub-subfamily. In terms of assembly, homotetramer. Mg(2+) is required as a cofactor.

It is found in the cytoplasm. The enzyme catalyses beta-D-fructose 6-phosphate + ATP = beta-D-fructose 1,6-bisphosphate + ADP + H(+). It functions in the pathway carbohydrate degradation; glycolysis; D-glyceraldehyde 3-phosphate and glycerone phosphate from D-glucose: step 3/4. With respect to regulation, allosterically activated by ADP and other diphosphonucleosides, and allosterically inhibited by phosphoenolpyruvate. Catalyzes the phosphorylation of D-fructose 6-phosphate to fructose 1,6-bisphosphate by ATP, the first committing step of glycolysis. This is ATP-dependent 6-phosphofructokinase from Thermotoga petrophila (strain ATCC BAA-488 / DSM 13995 / JCM 10881 / RKU-1).